The primary structure comprises 431 residues: Glutamate-1-semialdehyde 2,1-aminomutase (431 aa).

At Lys265 the chain carries N6-(pyridoxal phosphate)lysine.

It belongs to the class-III pyridoxal-phosphate-dependent aminotransferase family. HemL subfamily. Homodimer. Requires pyridoxal 5'-phosphate as cofactor.

The protein localises to the cytoplasm. The enzyme catalyses (S)-4-amino-5-oxopentanoate = 5-aminolevulinate. The protein operates within porphyrin-containing compound metabolism; protoporphyrin-IX biosynthesis; 5-aminolevulinate from L-glutamyl-tRNA(Glu): step 2/2. This is Glutamate-1-semialdehyde 2,1-aminomutase from Vibrio vulnificus (strain CMCP6).